The sequence spans 410 residues: Mannosyl phosphorylinositol ceramide synthase regulatory protein CSG2 (410 aa).

Positions 1–17 (MSTTLLWFSSVIGYVIQ) are cleaved as a signal peptide. Topologically, residues 18 to 50 (TKCLSNIQSKKEISVGPNGTIATPETNGDNGNS) are lumenal. 2 N-linked (GlcNAc...) asparagine glycosylation sites follow: asparagine 35 and asparagine 49. The chain crosses the membrane as a helical span at residues 51-71 (SSLTFYLTFMYFASWLLLVPA). Residues 72–141 (SRLWEKMRPM…SVATFKYVAK (70 aa)) are Cytoplasmic-facing. A helical transmembrane segment spans residues 142 to 161 (LTVLALIMIVADLTYNMALS). The Lumenal segment spans residues 162–167 (LSPAFD). A helical transmembrane segment spans residues 168–187 (VALMQNTAIFEIVTLLYGVC). Residues 188–197 (GISRKNYVFR) lie on the Cytoplasmic side of the membrane. The helical transmembrane segment at 198 to 217 (NFLIMMNAVIGILIISYTKA) threads the bilayer. Residues 218 to 245 (TCDMLAGKLSVNPNTGELSDPFLFDRLK) lie on the Lumenal side of the membrane. A helical membrane pass occupies residues 246-265 (GALICGLGALIMGPFAVLWN). Residues 266 to 285 (RWFCSNISKNENSAVVLVKQ) lie on the Cytoplasmic side of the membrane. The chain crosses the membrane as a helical span at residues 286 to 305 (STHMALIGIIGMVILLPFIP). The Lumenal segment spans residues 306–324 (KFPSRESVESISLFYNDKS). A helical membrane pass occupies residues 325–344 (FWFSLLGSIIFGSLPSLISI). Residues 345 to 355 (LELNRKAPAEY) are Cytoplasmic-facing. A helical membrane pass occupies residues 356 to 374 (LTTCNLGAIIFMGLAEWVC). The Lumenal segment spans residues 375-385 (EPTQTTIVRWE). The helical transmembrane segment at 386-404 (VIGYIMLTVSLLVLSVTLG) threads the bilayer. Residues 405–410 (EGKYHH) lie on the Cytoplasmic side of the membrane.

In terms of assembly, heterodimer of CSH1 and CSG2, and SUR1 and CSG2.

Its subcellular location is the endoplasmic reticulum membrane. Its function is as follows. Required for calcium regulation. May regulate calcium accumulation by a non-vacuole organelle. Also regulates the activity of CSH1 and SUR1 during mannosyl phosphorylinositol ceramide synthesis. This Saccharomyces cerevisiae (strain ATCC 204508 / S288c) (Baker's yeast) protein is Mannosyl phosphorylinositol ceramide synthase regulatory protein CSG2 (CSG2).